Consider the following 88-residue polypeptide: RNA-binding protein Hfq (88 aa).

Residues 9–68 enclose the Sm domain; sequence DPYLNVLRKERVPVSIYLVNGIKLQGQVESFDQFVVLLKNTVSQMVYKHAISTVVPSRAV.

This sequence belongs to the Hfq family. Homohexamer.

Its function is as follows. RNA chaperone that binds small regulatory RNA (sRNAs) and mRNAs to facilitate mRNA translational regulation in response to envelope stress, environmental stress and changes in metabolite concentrations. Also binds with high specificity to tRNAs. The polypeptide is RNA-binding protein Hfq (Cellvibrio japonicus (strain Ueda107) (Pseudomonas fluorescens subsp. cellulosa)).